The sequence spans 266 residues: Mitochondrial import inner membrane translocase subunit Tim29 (266 aa).

A mitochondrion-targeting transit peptide spans 1-37 (MVTAALKRFWSGGHGEAGGEAGGATTVAVKPGLWTRL). Topologically, residues 38–65 (STWAGALLRDYAEACGDAAAAARARPGR) are mitochondrial matrix. Residues 66–83 (AALYVGLLGGAAACCALA) form a helical membrane-spanning segment. Residues 84 to 266 (PSEAAFEEAL…DSLVQSDVSR (183 aa)) are Mitochondrial intermembrane-facing.

As to quaternary structure, component of the TIM22 complex, which core is composed of TIMM22, associated with TIMM10 (TIMM10A and/or TIMM10B), TIMM9, AGK and TIMM29. Interacts with TIMM10B; the interaction is direct. Interacts with TOMM40; linking the TIM22 complex to the TOM complex. Interacts with TIMM22 (when oxidized); the interaction is direct.

It is found in the mitochondrion inner membrane. In terms of biological role, component of the TIM22 complex, a complex that mediates the import and insertion of multi-pass transmembrane proteins into the mitochondrial inner membrane. The TIM22 complex forms a twin-pore translocase that uses the membrane potential as the external driving force. Required for the stability of the TIM22 complex and functions in the assembly of the TIMM22 protein into the TIM22 complex. May facilitate cooperation between TIM22 and TOM complexes by interacting with TOMM40. This Mus musculus (Mouse) protein is Mitochondrial import inner membrane translocase subunit Tim29 (Timm29).